Reading from the N-terminus, the 221-residue chain is Pyridoxine/pyridoxamine 5'-phosphate oxidase (221 aa).

Residues 1–21 form a disordered region; the sequence is MDYSDPAELRESYDGAPLDPR. Substrate is bound by residues 10 to 13 and lysine 68; that span reads RESY. FMN-binding positions include 63–68, 78–79, arginine 84, lysine 85, and glutamine 107; these read RTVLLK and FT. Residues tyrosine 125, arginine 129, and serine 133 each contribute to the substrate site. FMN-binding positions include 143–144 and tryptophan 189; that span reads QS. Substrate is bound at residue 195-197; the sequence is RMH. An FMN-binding site is contributed by arginine 199.

Belongs to the pyridoxamine 5'-phosphate oxidase family. As to quaternary structure, homodimer. FMN is required as a cofactor.

The catalysed reaction is pyridoxamine 5'-phosphate + O2 + H2O = pyridoxal 5'-phosphate + H2O2 + NH4(+). The enzyme catalyses pyridoxine 5'-phosphate + O2 = pyridoxal 5'-phosphate + H2O2. The protein operates within cofactor metabolism; pyridoxal 5'-phosphate salvage; pyridoxal 5'-phosphate from pyridoxamine 5'-phosphate: step 1/1. It functions in the pathway cofactor metabolism; pyridoxal 5'-phosphate salvage; pyridoxal 5'-phosphate from pyridoxine 5'-phosphate: step 1/1. In terms of biological role, catalyzes the oxidation of either pyridoxine 5'-phosphate (PNP) or pyridoxamine 5'-phosphate (PMP) into pyridoxal 5'-phosphate (PLP). The protein is Pyridoxine/pyridoxamine 5'-phosphate oxidase of Thermobifida fusca (strain YX).